An 85-amino-acid chain; its full sequence is Large ribosomal subunit protein bL27 (85 aa).

The tract at residues 1-21 (MAHKKGVGSSKNGRESESKRL) is disordered.

It belongs to the bacterial ribosomal protein bL27 family.

The polypeptide is Large ribosomal subunit protein bL27 (Porphyromonas gingivalis (strain ATCC 33277 / DSM 20709 / CIP 103683 / JCM 12257 / NCTC 11834 / 2561)).